The chain runs to 216 residues: Large ribosomal subunit protein uL3 (216 aa).

A disordered region spans residues 137-157 (GASHGAHKNHRKPGSIGGAST).

This sequence belongs to the universal ribosomal protein uL3 family. Part of the 50S ribosomal subunit. Forms a cluster with proteins L14 and L19.

Functionally, one of the primary rRNA binding proteins, it binds directly near the 3'-end of the 23S rRNA, where it nucleates assembly of the 50S subunit. The sequence is that of Large ribosomal subunit protein uL3 from Paenarthrobacter aurescens (strain TC1).